The primary structure comprises 340 residues: Biotin synthase (340 aa).

Residues 56 to 283 enclose the Radical SAM core domain; the sequence is NAVQLSTLLS…KAVVRLSAGR (228 aa). Positions 71, 75, and 78 each coordinate [4Fe-4S] cluster. Positions 115, 146, 206, and 278 each coordinate [2Fe-2S] cluster.

This sequence belongs to the radical SAM superfamily. Biotin synthase family. Homodimer. [4Fe-4S] cluster is required as a cofactor. Requires [2Fe-2S] cluster as cofactor.

It catalyses the reaction (4R,5S)-dethiobiotin + (sulfur carrier)-SH + 2 reduced [2Fe-2S]-[ferredoxin] + 2 S-adenosyl-L-methionine = (sulfur carrier)-H + biotin + 2 5'-deoxyadenosine + 2 L-methionine + 2 oxidized [2Fe-2S]-[ferredoxin]. It participates in cofactor biosynthesis; biotin biosynthesis; biotin from 7,8-diaminononanoate: step 2/2. Catalyzes the conversion of dethiobiotin (DTB) to biotin by the insertion of a sulfur atom into dethiobiotin via a radical-based mechanism. In Burkholderia lata (strain ATCC 17760 / DSM 23089 / LMG 22485 / NCIMB 9086 / R18194 / 383), this protein is Biotin synthase.